We begin with the raw amino-acid sequence, 441 residues long: UPF0761 membrane protein Clim_1521 (441 aa).

Helical transmembrane passes span 54 to 74 (IFLS…PFLA), 122 to 142 (TVPL…ISTI), 161 to 181 (AFTL…SSLG), 203 to 223 (LISF…YMLV), 233 to 253 (AFSG…WFVF), and 266 to 286 (GAIS…LVVL).

It belongs to the UPF0761 family.

Its subcellular location is the cell inner membrane. This Chlorobium limicola (strain DSM 245 / NBRC 103803 / 6330) protein is UPF0761 membrane protein Clim_1521.